The chain runs to 300 residues: MAAVSDIPVHLPKLLALFKTVVPKLVNNKHKGQYGRIGVIGGSLEYTGAPYFAAISSIRVGADLAHVFCHSNASAIIKSYSPDLIVHPVLDCVDAVERIAPWLERLHVVVIGPGLGREPGILKTASNVLKLCMDTKKPVVIDADGLFLLNDNLNLICGQPNVILTPNVMEFQRLFGEDDQAARQKMSLLGAGVTVLEKGANDKIYLPHCNEVHSMPSGGSGRRCGGQGDLLSGSLATFFSWSLQSGEPNPALVAACASSYFVKKLNAAAFQKFGRSLLASDMVNQIPSVFQTEFENSDPQ.

One can recognise a YjeF C-terminal domain in the interval 14–293 (LLALFKTVVP…NQIPSVFQTE (280 aa)). (6S)-NADPHX-binding positions include Gly-114 and 167 to 173 (NVMEFQR). Residues 198 to 202 (KGAND) and 219 to 228 (GSGRRCGGQG) contribute to the ATP site. Asp-229 lines the (6S)-NADPHX pocket.

The protein belongs to the NnrD/CARKD family. The cofactor is Mg(2+).

The catalysed reaction is (6S)-NADHX + ATP = ADP + phosphate + NADH + H(+). It carries out the reaction (6S)-NADPHX + ATP = ADP + phosphate + NADPH + H(+). Its function is as follows. Catalyzes the dehydration of the S-form of NAD(P)HX at the expense of ATP, which is converted to ADP. Together with NAD(P)HX epimerase, which catalyzes the epimerization of the S- and R-forms, the enzyme allows the repair of both epimers of NAD(P)HX, a damaged form of NAD(P)H that is a result of enzymatic or heat-dependent hydration. The polypeptide is ATP-dependent (S)-NAD(P)H-hydrate dehydratase (Drosophila melanogaster (Fruit fly)).